A 161-amino-acid chain; its full sequence is Dihydrofolate reductase (161 aa).

The 156-residue stretch at 2 to 157 (TLSIIVAHDK…IPHTFLHLVR (156 aa)) folds into the DHFR domain. Residue 6 to 8 (IVA) participates in substrate binding. NADP(+) is bound by residues 7–8 (VA) and 15–20 (IGYQNQ). Asp28 is a binding site for substrate. NADP(+) is bound at residue 44–47 (GRKT). Arg58 contributes to the substrate binding site. Residues 63-66 (LTNQ) and 93-98 (FGGQTL) each bind NADP(+). Thr112 provides a ligand contact to substrate.

This sequence belongs to the dihydrofolate reductase family.

The catalysed reaction is (6S)-5,6,7,8-tetrahydrofolate + NADP(+) = 7,8-dihydrofolate + NADPH + H(+). It functions in the pathway cofactor biosynthesis; tetrahydrofolate biosynthesis; 5,6,7,8-tetrahydrofolate from 7,8-dihydrofolate: step 1/1. Functionally, key enzyme in folate metabolism. Catalyzes an essential reaction for de novo glycine and purine synthesis, and for DNA precursor synthesis. This is Dihydrofolate reductase (folA) from Staphylococcus epidermidis.